Here is a 201-residue protein sequence, read N- to C-terminus: Recombination protein RecR (201 aa).

The C4-type zinc-finger motif lies at 57-72; sequence CRDCRTFTEQEVCTIC. A Toprim domain is found at 81–176; sequence GQICVVESPA…LASRIAHGVP (96 aa).

The protein belongs to the RecR family.

May play a role in DNA repair. It seems to be involved in an RecBC-independent recombinational process of DNA repair. It may act with RecF and RecO. In Edwardsiella ictaluri (strain 93-146), this protein is Recombination protein RecR.